The following is a 349-amino-acid chain: N-acetyltaurine hydrolase (349 aa).

6 residues coordinate a divalent metal cation: His-26, His-28, Glu-169, His-201, His-230, and Asp-298.

Belongs to the metallo-dependent hydrolases superfamily. Phosphotriesterase family. The cofactor is a divalent metal cation. As to expression, expressed in the kidney, liver and brainstem.

It is found in the cytoplasm. The protein localises to the cytosol. It catalyses the reaction N-acetyltaurine + H2O = taurine + acetate. The enzyme catalyses N-propanoyltaurine + H2O = propanoate + taurine. It carries out the reaction N-acetyl-L-methionine + H2O = L-methionine + acetate. The catalysed reaction is N-acetyl-L-isoleucine + H2O = L-isoleucine + acetate. It catalyses the reaction N-acetyl-L-leucine + H2O = L-leucine + acetate. The enzyme catalyses N-acetyl-L-valine + H2O = L-valine + acetate. In terms of biological role, N-acetyltaurine hydrolase that regulates feeding by catalyzing the hydrolysis of N-acetyltaurine into taurine and acetate. N-acetyltaurine has anorexigenic and anti-obesity effects that are dependent on GFRAL receptor and GDF15. PTER also acts on other N-acetyl amino acids (Met, Ile, Leu, Val) and N-propionyltaurine, but at lower rates. The chain is N-acetyltaurine hydrolase from Mus musculus (Mouse).